We begin with the raw amino-acid sequence, 709 residues long: Polyribonucleotide nucleotidyltransferase (709 aa).

Asp-486 and Asp-492 together coordinate Mg(2+). The KH domain maps to 553-612; it reads PRIHTIKINPDKIKDVIGKGGSVIRALTEETGTTIEIEDDGTVKIAATDGEKAKHAISRI. The region spanning 622-690 is the S1 motif domain; sequence ARIYTGKVTR…RQGRVRLSIK (69 aa).

It belongs to the polyribonucleotide nucleotidyltransferase family. In terms of assembly, component of the RNA degradosome, which is a multiprotein complex involved in RNA processing and mRNA degradation. Requires Mg(2+) as cofactor.

It is found in the cytoplasm. It carries out the reaction RNA(n+1) + phosphate = RNA(n) + a ribonucleoside 5'-diphosphate. Its function is as follows. Involved in mRNA degradation. Catalyzes the phosphorolysis of single-stranded polyribonucleotides processively in the 3'- to 5'-direction. This Photorhabdus laumondii subsp. laumondii (strain DSM 15139 / CIP 105565 / TT01) (Photorhabdus luminescens subsp. laumondii) protein is Polyribonucleotide nucleotidyltransferase.